The sequence spans 795 residues: Protein espinas (795 aa).

The tract at residues 30 to 96 (GTGLTFPPHR…FVSPLQRRHC (67 aa)) is disordered. Residues 52–66 (ASMSSNVASTATSSN) show a composition bias toward low complexity. The PET domain occupies 135–243 (LDFQRNSQSD…AVRLLSDERP (109 aa)). 3 LIM zinc-binding domains span residues 242 to 306 (RPCK…ETQK), 307 to 367 (PRCS…MFAE), and 368 to 430 (YCDY…GEPP). 2 disordered regions span residues 427 to 487 (GEPP…GSAG) and 616 to 684 (NRNT…EMQI). Basic and acidic residues-rich tracts occupy residues 459 to 471 (RSGD…ESSR) and 637 to 649 (LDNR…RFHS). Positions 650–662 (VQDTMSRSKSYTD) are enriched in polar residues. Residues 666 to 675 (ARRRRRRRNQ) are compositionally biased toward basic residues.

It belongs to the prickle / espinas / testin family.

The sequence is that of Protein espinas from Drosophila pseudoobscura pseudoobscura (Fruit fly).